Reading from the N-terminus, the 26-residue chain is Cytochrome c oxidase subunit 2 (26 aa).

This sequence belongs to the cytochrome c oxidase subunit 2 family. As to quaternary structure, component of the cytochrome c oxidase (complex IV, CIV), a multisubunit enzyme composed of a catalytic core of 3 subunits and several supernumerary subunits. The complex exists as a monomer or a dimer and forms supercomplexes (SCs) in the inner mitochondrial membrane with ubiquinol-cytochrome c oxidoreductase (cytochrome b-c1 complex, complex III, CIII). Requires Cu cation as cofactor.

Its subcellular location is the mitochondrion inner membrane. The enzyme catalyses 4 Fe(II)-[cytochrome c] + O2 + 8 H(+)(in) = 4 Fe(III)-[cytochrome c] + 2 H2O + 4 H(+)(out). Functionally, component of the cytochrome c oxidase, the last enzyme in the mitochondrial electron transport chain which drives oxidative phosphorylation. The respiratory chain contains 3 multisubunit complexes succinate dehydrogenase (complex II, CII), ubiquinol-cytochrome c oxidoreductase (cytochrome b-c1 complex, complex III, CIII) and cytochrome c oxidase (complex IV, CIV), that cooperate to transfer electrons derived from NADH and succinate to molecular oxygen, creating an electrochemical gradient over the inner membrane that drives transmembrane transport and the ATP synthase. Cytochrome c oxidase is the component of the respiratory chain that catalyzes the reduction of oxygen to water. Electrons originating from reduced cytochrome c in the intermembrane space (IMS) are transferred via the dinuclear copper A center (CU(A)) of subunit 2 and heme A of subunit 1 to the active site in subunit 1, a binuclear center (BNC) formed by heme A3 and copper B (CU(B)). The BNC reduces molecular oxygen to 2 water molecules using 4 electrons from cytochrome c in the IMS and 4 protons from the mitochondrial matrix. This chain is Cytochrome c oxidase subunit 2 (COX2), found in Solanum tuberosum (Potato).